Reading from the N-terminus, the 154-residue chain is CASP-like protein 5B2 (154 aa).

Over 1-10 (MKKLLGGPGT) the chain is Cytoplasmic. A helical membrane pass occupies residues 11 to 31 (VCGLLLRIGQCASAAASIGVM). The Extracellular segment spans residues 32–42 (VSAKEFSVHTA). Residues 43–63 (FCYLIASMGLQLLWSFGLACL) form a helical membrane-spanning segment. Residues 64-77 (DVYALRGKKDLQNP) are Cytoplasmic-facing. A helical transmembrane segment spans residues 78–98 (ILVSLFVVGDWVTAMLSLAAA). Residues 99–129 (CSSAGVVVLYEKDIKYCNTQSQYPCLRYEVA) lie on the Extracellular side of the membrane. A helical transmembrane segment spans residues 130–150 (VALSFVTWIQIAVSSHVTFWI). The Cytoplasmic segment spans residues 151–154 (LASV).

Belongs to the Casparian strip membrane proteins (CASP) family. As to quaternary structure, homodimer and heterodimers. As to expression, expressed in the stele of the root.

It localises to the cell membrane. This is CASP-like protein 5B2 from Arabidopsis thaliana (Mouse-ear cress).